Consider the following 224-residue polypeptide: Putative O-methyltransferase MT1258 (224 aa).

The segment covering 1-10 has biased composition (basic and acidic residues); that stretch reads MDGTPGHDDM. The disordered stretch occupies residues 1–21; sequence MDGTPGHDDMPGQPAPSRGES. S-adenosyl-L-methionine-binding positions include Val-51, Glu-73, 75–76, Ser-81, Asp-99, and Ile-100; that span reads GT. Asp-147 serves as a coordination point for substrate. Position 149 (Asp-149) interacts with S-adenosyl-L-methionine.

Belongs to the class I-like SAM-binding methyltransferase superfamily. Cation-dependent O-methyltransferase family.

The chain is Putative O-methyltransferase MT1258 from Mycobacterium tuberculosis (strain CDC 1551 / Oshkosh).